The sequence spans 424 residues: Histidine--tRNA ligase (424 aa).

The protein belongs to the class-II aminoacyl-tRNA synthetase family. Homodimer.

Its subcellular location is the cytoplasm. It carries out the reaction tRNA(His) + L-histidine + ATP = L-histidyl-tRNA(His) + AMP + diphosphate + H(+). This is Histidine--tRNA ligase (hisS) from Bacillus subtilis (strain 168).